A 213-amino-acid polypeptide reads, in one-letter code: Large ribosomal subunit protein bL25 (213 aa).

Positions 191-207 (AEPTDAPTAPAAAPGAE) are enriched in low complexity. The tract at residues 191-213 (AEPTDAPTAPAAAPGAEAPKDKA) is disordered.

This sequence belongs to the bacterial ribosomal protein bL25 family. CTC subfamily. In terms of assembly, part of the 50S ribosomal subunit; part of the 5S rRNA/L5/L18/L25 subcomplex. Contacts the 5S rRNA. Binds to the 5S rRNA independently of L5 and L18.

In terms of biological role, this is one of the proteins that binds to the 5S RNA in the ribosome where it forms part of the central protuberance. This chain is Large ribosomal subunit protein bL25, found in Polynucleobacter asymbioticus (strain DSM 18221 / CIP 109841 / QLW-P1DMWA-1) (Polynucleobacter necessarius subsp. asymbioticus).